The primary structure comprises 1368 residues: Protein suppressor 2 of zeste (1368 aa).

The RING-type zinc-finger motif lies at Cys-35 to Lys-74. Disordered stretches follow at residues Ser-245 to Leu-321, Gln-448 to Gln-628, Thr-640 to Gln-718, Ala-861 to Cys-903, Ala-935 to Ala-1001, Ser-1057 to Asn-1103, Ile-1116 to Leu-1141, Ala-1161 to Arg-1193, Ser-1211 to Thr-1271, and Val-1298 to Pro-1322. A compositionally biased stretch (polar residues) spans Pro-449–Tyr-461. A compositionally biased stretch (low complexity) spans Ser-462–Ser-495. Over residues Ser-496–Lys-506 the composition is skewed to basic residues. Composition is skewed to low complexity over residues Ala-599–Gln-628 and Pro-672–Gln-689. Polar residues-rich tracts occupy residues Leu-936–Arg-953 and Leu-962–Ser-977. 4 stretches are compositionally biased toward low complexity: residues Asn-1078 to Asn-1099, Asn-1119 to Gly-1138, Ala-1161 to Ala-1183, and Ser-1231 to Pro-1263.

Its subcellular location is the nucleus. Regulates expression of the homeotic selector genes by influencing higher-order chromatin structure through interaction with other proteins. The chain is Protein suppressor 2 of zeste (Su(z)2) from Drosophila melanogaster (Fruit fly).